A 181-amino-acid chain; its full sequence is Proteinase inhibitor A (181 aa).

The signal sequence occupies residues Met1–Gly24. Disulfide bonds link Cys67–Cys113, Cys134–Cys143, and Cys136–Cys139.

The protein belongs to the protease inhibitor I3 (leguminous Kunitz-type inhibitor) family.

The protein localises to the secreted. Its function is as follows. Possesses two reactive sites. Inhibits an equimolar amount of trypsin and chymotrypsin simultaneously, and inhibits kallikrein weakly. This chain is Proteinase inhibitor A, found in Sagittaria sagittifolia (Arrowhead).